The sequence spans 234 residues: Glucosamine-6-phosphate deaminase (234 aa).

Asp63 (proton acceptor; for enolization step) is an active-site residue. Asn129 serves as the catalytic For ring-opening step. His131 acts as the Proton acceptor; for ring-opening step in catalysis. Catalysis depends on Glu136, which acts as the For ring-opening step.

The protein belongs to the glucosamine/galactosamine-6-phosphate isomerase family. NagB subfamily.

It catalyses the reaction alpha-D-glucosamine 6-phosphate + H2O = beta-D-fructose 6-phosphate + NH4(+). Its pathway is amino-sugar metabolism; N-acetylneuraminate degradation; D-fructose 6-phosphate from N-acetylneuraminate: step 5/5. In terms of biological role, catalyzes the reversible isomerization-deamination of glucosamine 6-phosphate (GlcN6P) to form fructose 6-phosphate (Fru6P) and ammonium ion. This chain is Glucosamine-6-phosphate deaminase, found in Listeria monocytogenes serotype 4a (strain HCC23).